Here is a 324-residue protein sequence, read N- to C-terminus: MYSGNKVVISWIVSIGFVGMPEFMSSKTFALCRQRSFLHGPAGIRSDEEKENNFFGRVSFMDAALLLEYGWVLLVLIGLEGILAADNALVMAVMVKHLPEEKRKKALFYGLAGAFVLRFGSLFAISFLVNVWQVQAIGAIYLLYISASHLLKRYVFKKEDTHKETKQSGFWPTVLKVELADIAFAVDSILAAVALAVTLPGTSLPKIGGLDGGQFLVILAGGIIGLVIMRFAASMFVKLLKERPSLETAAFVIVGWVGVKLALYTLAHRDIAVVSEHFIHSGTWKLIFWGVLAAIAVCGWFMSGGKKQPEGAQNEQKNSTRERA.

8 helical membrane passes run 4 to 24, 63 to 83, 106 to 128, 132 to 151, 179 to 199, 209 to 229, 246 to 266, and 282 to 302; these read GNKV…PEFM, AALL…EGIL, ALFY…ISFL, WQVQ…SHLL, LADI…AVTL, GLDG…LVIM, LETA…LYTL, and GTWK…GWFM.

It belongs to the TerC family.

It is found in the cell membrane. This is an uncharacterized protein from Bacillus subtilis (strain 168).